Reading from the N-terminus, the 253-residue chain is Triosephosphate isomerase (253 aa).

Residue 9-11 participates in substrate binding; the sequence is NWK. His97 (electrophile) is an active-site residue. The Proton acceptor role is filled by Glu169. Residues Gly175, Ser215, and 236–237 each bind substrate; that span reads GG.

It belongs to the triosephosphate isomerase family. As to quaternary structure, homodimer.

It localises to the cytoplasm. It catalyses the reaction D-glyceraldehyde 3-phosphate = dihydroxyacetone phosphate. It functions in the pathway carbohydrate biosynthesis; gluconeogenesis. The protein operates within carbohydrate degradation; glycolysis; D-glyceraldehyde 3-phosphate from glycerone phosphate: step 1/1. Functionally, involved in the gluconeogenesis. Catalyzes stereospecifically the conversion of dihydroxyacetone phosphate (DHAP) to D-glyceraldehyde-3-phosphate (G3P). In Staphylococcus saprophyticus subsp. saprophyticus (strain ATCC 15305 / DSM 20229 / NCIMB 8711 / NCTC 7292 / S-41), this protein is Triosephosphate isomerase.